A 611-amino-acid chain; its full sequence is Leucine aminopeptidase (611 aa).

Substrate-binding positions include 129-131 and 278-282; these read QCQ and GGMEN. A Zn(2+)-binding site is contributed by histidine 305. Glutamate 306 (proton acceptor) is an active-site residue. Zn(2+) contacts are provided by histidine 309 and glutamate 328. Catalysis depends on tyrosine 393, which acts as the Proton donor. Residue 562 to 564 participates in substrate binding; it reads RMK.

Belongs to the peptidase M1 family. It depends on Zn(2+) as a cofactor.

It is found in the cytoplasm. It catalyses the reaction an epoxide + H2O = an ethanediol. In terms of biological role, aminopeptidase that preferentially cleaves di- and tripeptides. Also has low epoxide hydrolase activity (in vitro). Can hydrolyze the epoxide leukotriene LTA(4) but it forms preferentially 5,6-dihydroxy-7,9,11,14-eicosatetraenoic acid rather than the cytokine leukotriene B(4) as the product compared to the homologous mammalian enzyme (in vitro). This is Leucine aminopeptidase (LKHA4) from Oryza sativa subsp. japonica (Rice).